The following is an 861-amino-acid chain: DNA primase (861 aa).

Residues 805–843 form a CHC2-type zinc finger; the sequence is CLTRNHKGNRENVLVYLEFKVDNNRILIILWSKCFTTKC.

This sequence belongs to the herpesviridae DNA primase family. In terms of assembly, associates with the helicase and the primase-associated factor to form the helicase-primase factor.

It localises to the host nucleus. Functionally, essential component of the helicase/primase complex. Unwinds the DNA at the replication forks and generates single-stranded DNA for both leading and lagging strand synthesis. The primase initiates primer synthesis and thereby produces large amount of short RNA primers on the lagging strand that the polymerase elongates using dNTPs. The protein is DNA primase (U43) of Human herpesvirus 7 (strain JI) (HHV-7).